Reading from the N-terminus, the 156-residue chain is MSRRVRAPIRHILPDPKFGNVMVAKFVNMLMVDGKKSVAEKVVYQALETAGKKKNMEAISLLEEALDKVRPAVEVKSRRVGGATYQVPVEVRPVRQNALAMRWLIEAARNRNEKSMAERLANEFLEAVEERGAAVKKRDETHRMAEANKAFAHFRW.

Belongs to the universal ribosomal protein uS7 family. In terms of assembly, part of the 30S ribosomal subunit. Contacts proteins S9 and S11.

In terms of biological role, one of the primary rRNA binding proteins, it binds directly to 16S rRNA where it nucleates assembly of the head domain of the 30S subunit. Is located at the subunit interface close to the decoding center, probably blocks exit of the E-site tRNA. The chain is Small ribosomal subunit protein uS7 from Dichelobacter nodosus (strain VCS1703A).